Here is a 591-residue protein sequence, read N- to C-terminus: Eukaryotic translation initiation factor 3 subunit D (591 aa).

The segment at 100 to 159 (SGGNPDEDAAFRLVDGKPPPRPKFGPKWRFNPHHNRNQLPQRRDEEVEAKKRDAEKERAR) is disordered. Positions 123-135 (FGPKWRFNPHHNR) are enriched in basic residues. Positions 140-159 (QRRDEEVEAKKRDAEKERAR) are enriched in basic and acidic residues. Residues 309–323 (QLDLLSVHETSQEPL) are RNA gate. Residues 549-560 (DYVEEPLPEDEQ) show a composition bias toward acidic residues. A disordered region spans residues 549–591 (DYVEEPLPEDEQVQPTEENTEGAEASVAATKETEEKKADDAQA). Positions 579-591 (KETEEKKADDAQA) are enriched in basic and acidic residues.

It belongs to the eIF-3 subunit D family. As to quaternary structure, component of the eukaryotic translation initiation factor 3 (eIF-3) complex, which is composed of at least 13 different subunits.

It localises to the cytoplasm. MRNA cap-binding component of the eukaryotic translation initiation factor 3 (eIF-3) complex, which is involved in protein synthesis of a specialized repertoire of mRNAs and, together with other initiation factors, stimulates binding of mRNA and methionyl-tRNAi to the 40S ribosome. The eIF-3 complex specifically targets and initiates translation of a subset of mRNAs involved in cell proliferation. In the eIF-3 complex, eif3d specifically recognizes and binds the 7-methylguanosine cap of a subset of mRNAs. In Arabidopsis thaliana (Mouse-ear cress), this protein is Eukaryotic translation initiation factor 3 subunit D (TIF3D1).